A 415-amino-acid polypeptide reads, in one-letter code: Gamma-glutamyl phosphate reductase (415 aa).

It belongs to the gamma-glutamyl phosphate reductase family.

The protein localises to the cytoplasm. It carries out the reaction L-glutamate 5-semialdehyde + phosphate + NADP(+) = L-glutamyl 5-phosphate + NADPH + H(+). Its pathway is amino-acid biosynthesis; L-proline biosynthesis; L-glutamate 5-semialdehyde from L-glutamate: step 2/2. Functionally, catalyzes the NADPH-dependent reduction of L-glutamate 5-phosphate into L-glutamate 5-semialdehyde and phosphate. The product spontaneously undergoes cyclization to form 1-pyrroline-5-carboxylate. The protein is Gamma-glutamyl phosphate reductase of Thermotoga petrophila (strain ATCC BAA-488 / DSM 13995 / JCM 10881 / RKU-1).